Here is a 70-residue protein sequence, read N- to C-terminus: Protein SlyX homolog (70 aa).

The protein belongs to the SlyX family.

This Nitrobacter winogradskyi (strain ATCC 25391 / DSM 10237 / CIP 104748 / NCIMB 11846 / Nb-255) protein is Protein SlyX homolog.